The primary structure comprises 464 residues: Fumarate hydratase class II (464 aa).

Substrate-binding positions include 98–100 (SGT), 129–132 (HPND), 139–141 (SSN), and Thr-187. The Proton donor/acceptor role is filled by His-188. The active site involves Ser-318. Residues Ser-319 and 324–326 (KVN) each bind substrate.

It belongs to the class-II fumarase/aspartase family. Fumarase subfamily. Homotetramer.

It is found in the cytoplasm. The enzyme catalyses (S)-malate = fumarate + H2O. Its pathway is carbohydrate metabolism; tricarboxylic acid cycle; (S)-malate from fumarate: step 1/1. Functionally, involved in the TCA cycle. Catalyzes the stereospecific interconversion of fumarate to L-malate. This Pasteurella multocida (strain Pm70) protein is Fumarate hydratase class II.